The following is a 338-amino-acid chain: Glycerol-3-phosphate dehydrogenase [NAD(P)+] (338 aa).

S13, W14, and K108 together coordinate NADPH. Positions 108, 139, and 141 each coordinate sn-glycerol 3-phosphate. A143 contributes to the NADPH binding site. Sn-glycerol 3-phosphate is bound by residues K194, D247, S257, R258, and N259. K194 functions as the Proton acceptor in the catalytic mechanism. NADPH is bound at residue R258. NADPH contacts are provided by V282 and E284.

The protein belongs to the NAD-dependent glycerol-3-phosphate dehydrogenase family.

Its subcellular location is the cytoplasm. It catalyses the reaction sn-glycerol 3-phosphate + NAD(+) = dihydroxyacetone phosphate + NADH + H(+). The enzyme catalyses sn-glycerol 3-phosphate + NADP(+) = dihydroxyacetone phosphate + NADPH + H(+). The protein operates within membrane lipid metabolism; glycerophospholipid metabolism. Its function is as follows. Catalyzes the reduction of the glycolytic intermediate dihydroxyacetone phosphate (DHAP) to sn-glycerol 3-phosphate (G3P), the key precursor for phospholipid synthesis. In Listeria monocytogenes serotype 4a (strain HCC23), this protein is Glycerol-3-phosphate dehydrogenase [NAD(P)+].